Consider the following 246-residue polypeptide: 1-(5-phosphoribosyl)-5-[(5-phosphoribosylamino)methylideneamino] imidazole-4-carboxamide isomerase (246 aa).

The active-site Proton acceptor is the Asp8. Asp129 functions as the Proton donor in the catalytic mechanism.

Belongs to the HisA/HisF family.

It localises to the cytoplasm. It carries out the reaction 1-(5-phospho-beta-D-ribosyl)-5-[(5-phospho-beta-D-ribosylamino)methylideneamino]imidazole-4-carboxamide = 5-[(5-phospho-1-deoxy-D-ribulos-1-ylimino)methylamino]-1-(5-phospho-beta-D-ribosyl)imidazole-4-carboxamide. Its pathway is amino-acid biosynthesis; L-histidine biosynthesis; L-histidine from 5-phospho-alpha-D-ribose 1-diphosphate: step 4/9. The polypeptide is 1-(5-phosphoribosyl)-5-[(5-phosphoribosylamino)methylideneamino] imidazole-4-carboxamide isomerase (Nitrobacter hamburgensis (strain DSM 10229 / NCIMB 13809 / X14)).